The chain runs to 254 residues: Alcohol dehydrogenase (254 aa).

10–33 (FVAGLGGIGLDTSRELVKRDLKNL) contributes to the NAD(+) binding site. S138 is a binding site for substrate. Residue Y151 is the Proton acceptor of the active site.

It belongs to the short-chain dehydrogenases/reductases (SDR) family. Homodimer.

It catalyses the reaction a primary alcohol + NAD(+) = an aldehyde + NADH + H(+). It carries out the reaction a secondary alcohol + NAD(+) = a ketone + NADH + H(+). The sequence is that of Alcohol dehydrogenase (Adh) from Drosophila guanche (Fruit fly).